Here is a 162-residue protein sequence, read N- to C-terminus: Phospholipase A2 (162 aa).

An N-terminal signal peptide occupies residues M1–A22. The propeptide occupies K23–R35. 6 cysteine pairs are disulfide-bonded: C60-C155, C62-C78, C77-C134, C84-C127, C94-C120, and C113-C125. Residues Y61, G63, and G65 each contribute to the Ca(2+) site. H81 is a catalytic residue. D82 lines the Ca(2+) pocket. D128 is an active-site residue.

Belongs to the phospholipase A2 family. Group I subfamily. D49 sub-subfamily. Ca(2+) serves as cofactor. Expressed both outside and in acontia, a specialised envenomation structure laden with batteries of venom-containing nematocysts found only in the superfamily Metridioidea.

It localises to the secreted. Its subcellular location is the nematocyst. It carries out the reaction a 1,2-diacyl-sn-glycero-3-phosphocholine + H2O = a 1-acyl-sn-glycero-3-phosphocholine + a fatty acid + H(+). Its function is as follows. PLA2 catalyzes the calcium-dependent hydrolysis of the 2-acyl groups in 3-sn-phosphoglycerides. In Calliactis polypus (Hermit crab anemone), this protein is Phospholipase A2.